The sequence spans 1187 residues: Protein CHROMATIN REMODELING 8 (1187 aa).

Positions 1–55 (MEEDEDQFLLSSLGVTSANPEDLEQKILDEATKKPDNDEGGSVEEKSTQLEGTNL) are disordered. Residues 9 to 19 (LLSSLGVTSAN) show a composition bias toward polar residues. Positions 23–48 (LEQKILDEATKKPDNDEGGSVEEKST) are enriched in basic and acidic residues. Positions 110–170 (LQHALATDRL…LKRKLKEIRK (61 aa)) form a coiled coil. The short motif at 162-169 (KRKLKEIR) is the Nuclear localization signal 1 element. 2 disordered regions span residues 223-247 (GFER…DENE) and 273-343 (DAED…DGRR). 2 consecutive short sequence motifs (nuclear localization signal) follow at residues 290–297 (LRKLYKTP) and 310–317 (GKKSKKTR). The span at 305 to 328 (KKRKAGKKSKKTRPLPEKKWRKRI) shows a compositional bias: basic residues. In terms of domain architecture, Helicase ATP-binding spans 397–594 (WELHCQRAGG…WSLFDFVFPG (198 aa)). Residue 410–417 (DEMGLGKT) coordinates ATP. A disordered region spans residues 467–501 (SAQDSGHGKGQGKASESDYDSESSVDSDHEPKSKN). Residues 492 to 501 (DSDHEPKSKN) show a composition bias toward basic and acidic residues. The short motif at 545–548 (DEGH) is the DEGH box element. In terms of domain architecture, Helicase C-terminal spans 730-890 (KVVAEVLKVW…RRFFKARDMK (161 aa)). A coiled-coil region spans residues 987–1016 (NANDEEEKMRLEHQASQVAQRAAEALRQSR). Residues 1050-1059 (VNSRLTQTGD) show a composition bias toward polar residues. A disordered region spans residues 1050–1075 (VNSRLTQTGDKPSAIKNGISAGLSSG).

This sequence belongs to the SNF2/RAD54 helicase family. Homodimer. Binds DNA.

Its subcellular location is the nucleus. Functionally, essential factor involved in transcription-coupled nucleotide excision repair (TCR) which allows RNA polymerase II-blocking lesions to be rapidly removed from the transcribed strand of active genes. Upon DNA-binding, it locally modifies DNA conformation by wrapping the DNA around itself, thereby modifying the interface between stalled RNA polymerase II and DNA. It is required for transcription-coupled repair complex formation. This is Protein CHROMATIN REMODELING 8 from Arabidopsis thaliana (Mouse-ear cress).